The primary structure comprises 271 residues: Putative phosphoenolpyruvate synthase regulatory protein (271 aa).

An ADP-binding site is contributed by 152–159 (GVSRCGKT).

This sequence belongs to the pyruvate, phosphate/water dikinase regulatory protein family. PSRP subfamily.

It catalyses the reaction [pyruvate, water dikinase] + ADP = [pyruvate, water dikinase]-phosphate + AMP + H(+). The enzyme catalyses [pyruvate, water dikinase]-phosphate + phosphate + H(+) = [pyruvate, water dikinase] + diphosphate. In terms of biological role, bifunctional serine/threonine kinase and phosphorylase involved in the regulation of the phosphoenolpyruvate synthase (PEPS) by catalyzing its phosphorylation/dephosphorylation. The protein is Putative phosphoenolpyruvate synthase regulatory protein of Legionella pneumophila (strain Lens).